Here is a 115-residue protein sequence, read N- to C-terminus: Holo-[acyl-carrier-protein] synthase (115 aa).

2 residues coordinate Mg(2+): D6 and E51.

Belongs to the P-Pant transferase superfamily. AcpS family. It depends on Mg(2+) as a cofactor.

The protein resides in the cytoplasm. The enzyme catalyses apo-[ACP] + CoA = holo-[ACP] + adenosine 3',5'-bisphosphate + H(+). In terms of biological role, transfers the 4'-phosphopantetheine moiety from coenzyme A to a Ser of acyl-carrier-protein. The polypeptide is Holo-[acyl-carrier-protein] synthase (Campylobacter jejuni subsp. jejuni serotype O:6 (strain 81116 / NCTC 11828)).